A 207-amino-acid chain; its full sequence is Uracil phosphoribosyltransferase (207 aa).

Residues arginine 77, arginine 102, and 129 to 137 (DPMLATGGS) contribute to the 5-phospho-alpha-D-ribose 1-diphosphate site. Residues isoleucine 192 and 197–199 (GDA) each bind uracil. Aspartate 198 contacts 5-phospho-alpha-D-ribose 1-diphosphate.

Belongs to the UPRTase family. Mg(2+) is required as a cofactor.

It carries out the reaction UMP + diphosphate = 5-phospho-alpha-D-ribose 1-diphosphate + uracil. The protein operates within pyrimidine metabolism; UMP biosynthesis via salvage pathway; UMP from uracil: step 1/1. With respect to regulation, allosterically activated by GTP. Catalyzes the conversion of uracil and 5-phospho-alpha-D-ribose 1-diphosphate (PRPP) to UMP and diphosphate. The protein is Uracil phosphoribosyltransferase of Ureaplasma parvum serovar 3 (strain ATCC 27815 / 27 / NCTC 11736).